Here is a 487-residue protein sequence, read N- to C-terminus: Probable Xaa-Pro aminopeptidase AFUB_014460 (487 aa).

The Mn(2+) site is built by aspartate 267, aspartate 278, glutamate 416, and glutamate 455.

It belongs to the peptidase M24B family. The cofactor is Mn(2+).

It catalyses the reaction Release of any N-terminal amino acid, including proline, that is linked to proline, even from a dipeptide or tripeptide.. Catalyzes the removal of a penultimate prolyl residue from the N-termini of peptides. This Aspergillus fumigatus (strain CBS 144.89 / FGSC A1163 / CEA10) (Neosartorya fumigata) protein is Probable Xaa-Pro aminopeptidase AFUB_014460.